Here is a 1073-residue protein sequence, read N- to C-terminus: Receptor-type guanylate cyclase gcy-23 (1073 aa).

Positions 1–15 (MRRELFIFLLLLGEC) are cleaved as a signal peptide. Over 16–458 (ANVKVKVGHI…FRNEKCDYTT (443 aa)) the chain is Extracellular. Asn-336 carries N-linked (GlcNAc...) asparagine glycosylation. A helical transmembrane segment spans residues 459 to 479 (LIIGGCIVLLIILLIICFFIL). The Cytoplasmic segment spans residues 480–1073 (SRVCENRALA…QQQNFSQLGI (594 aa)). One can recognise a Protein kinase domain in the interval 508 to 808 (MKSMLSIGSS…RVRLNTENYL (301 aa)). A coiled-coil region spans residues 813-844 (SLVDQMMRMMEQYANNLEKLVAERTGMLEEAN). Residues 878–1008 (TVMFSDIVGF…DTVNVASRME (131 aa)) form the Guanylate cyclase domain. Residues Asp-883, Ile-884, and Asp-927 each coordinate Mg(2+).

Belongs to the adenylyl cyclase class-4/guanylyl cyclase family. Expressed specifically in AFD sensory neurons.

The protein resides in the cell membrane. Its subcellular location is the cell projection. It is found in the cilium. It carries out the reaction GTP = 3',5'-cyclic GMP + diphosphate. In terms of biological role, guanylate cyclase involved in the production of the second messenger cGMP. Regulates thermotaxis responses in AFD sensory neurons. May regulate AFD neuronal activity such as calcium responses to temperature gradients. This is Receptor-type guanylate cyclase gcy-23 from Caenorhabditis elegans.